A 554-amino-acid chain; its full sequence is (+)-delta-cadinene synthase isozyme XC1 (554 aa).

Low complexity predominate over residues 1 to 16 (MASQVSQMPSSSPLSS). Residues 1-23 (MASQVSQMPSSSPLSSNKDEMRP) form a disordered region. Mg(2+) is bound by residues Asp-307, Asp-311, Asp-451, and Glu-455. The DDXXD motif signature appears at 307–311 (DDTYD).

It belongs to the terpene synthase family. Requires Mg(2+) as cofactor.

The catalysed reaction is (2E,6E)-farnesyl diphosphate = (1S,8aR)-delta-cadinene + diphosphate. Its pathway is secondary metabolite biosynthesis; terpenoid biosynthesis. In terms of biological role, responsible for the cyclization of trans,trans-farnesyl diphosphate (FPP) to (+)-delta cadinene. The chain is (+)-delta-cadinene synthase isozyme XC1 from Gossypium arboreum (Tree cotton).